Here is a 114-residue protein sequence, read N- to C-terminus: Large ribosomal subunit protein bL19 (114 aa).

It belongs to the bacterial ribosomal protein bL19 family.

In terms of biological role, this protein is located at the 30S-50S ribosomal subunit interface and may play a role in the structure and function of the aminoacyl-tRNA binding site. The protein is Large ribosomal subunit protein bL19 of Desulfatibacillum aliphaticivorans.